Reading from the N-terminus, the 138-residue chain is Acidic phospholipase A2 Cvv-E6e (138 aa).

Positions 1-16 (MRTLWILAVLLLGVEG) are cleaved as a signal peptide. 7 cysteine pairs are disulfide-bonded: cysteine 42–cysteine 131, cysteine 44–cysteine 60, cysteine 59–cysteine 111, cysteine 65–cysteine 138, cysteine 66–cysteine 104, cysteine 73–cysteine 97, and cysteine 91–cysteine 102. Tyrosine 43, glycine 45, and glycine 47 together coordinate Ca(2+). Histidine 63 is a catalytic residue. A Ca(2+)-binding site is contributed by aspartate 64. Aspartate 105 is an active-site residue.

It depends on Ca(2+) as a cofactor. As to expression, expressed by the venom gland.

The protein localises to the secreted. It catalyses the reaction a 1,2-diacyl-sn-glycero-3-phosphocholine + H2O = a 1-acyl-sn-glycero-3-phosphocholine + a fatty acid + H(+). Functionally, snake venom phospholipase A2 (PLA2) that significantly inhibits ADP-induced platelet aggregation in platelet-rich plasma of human, rabbit and guinea pig. PLA2 catalyzes the calcium-dependent hydrolysis of the 2-acyl groups in 3-sn-phosphoglycerides. The sequence is that of Acidic phospholipase A2 Cvv-E6e from Crotalus viridis viridis (Prairie rattlesnake).